The sequence spans 358 residues: MAIKKLNNITLTPLQKQNRKKIQVWLYTILLLCFAIVLVGGATRLTGSGLSITEWKPIHGVIPPISINQWQEEFLKYQQIAQYKVLNRDMTLNAFKVIFWWEWGHRVLGRFVGLVALLGLVLFWVTKRIEKNIFLQLLTVPILIAMQGIIGWWMVASGLGQSNLTSVSQYRLAIHLIAACLVIIFVTYLSRGLAEYSEKPANQGVQHFAGWLVFLILVEIYFGALVAGLHAGKVYNTWPLMDGQILPDGLLNYDPVWLNFFENPLTVQFVHRCFSYFLFITAVIHALYVQKSVPHSAHAHRAIFLCIMIVMQAFLGIITLLHEVPISLGLIHQGGALVVLCFSVMHWRATKGAYRVVE.

The next 8 membrane-spanning stretches (helical) occupy residues 22–42, 107–127, 133–153, 172–192, 208–228, 269–289, 302–322, and 324–344; these read IQVW…VGGA, VLGR…WVTK, IFLQ…IGWW, LAIH…LSRG, FAGW…LVAG, FVHR…ALYV, AIFL…TLLH, and VPIS…CFSV. Heme is bound at residue His-271. His-332 contributes to the heme binding site.

The protein belongs to the COX15/CtaA family. Type 2 subfamily. In terms of assembly, interacts with CtaB. Requires heme b as cofactor.

It localises to the cell membrane. The catalysed reaction is Fe(II)-heme o + 2 A + H2O = Fe(II)-heme a + 2 AH2. Its pathway is porphyrin-containing compound metabolism; heme A biosynthesis; heme A from heme O: step 1/1. Functionally, catalyzes the conversion of heme O to heme A by two successive hydroxylations of the methyl group at C8. The first hydroxylation forms heme I, the second hydroxylation results in an unstable dihydroxymethyl group, which spontaneously dehydrates, resulting in the formyl group of heme A. The protein is Heme A synthase of Bartonella bacilliformis (strain ATCC 35685 / KC583 / Herrer 020/F12,63).